The following is a 1257-amino-acid chain: Endochitinase A (1257 aa).

Residues 1–21 (MVFKPLTIAAAIAGLTPFVSA) form the signal peptide. The GH18 domain maps to 28–339 (SNVAVYYGQG…DVIKDILVAV (312 aa)). The Proton donor role is filled by E175. Disordered stretches follow at residues 364 to 429 (TPVA…STPV), 595 to 980 (TPAA…LAPI), and 1141 to 1174 (DALTASPSGSQPAGESSPGQSAPTAPASTAPTTT). The segment covering 595–696 (TPAASSSPAV…STPVRSTSSV (102 aa)) has biased composition (low complexity). The span at 700 to 715 (KSSSAPVIPKPSSTVI) shows a compositional bias: polar residues. Low complexity predominate over residues 716-935 (ATFTSSSGSL…ASGSGAQDST (220 aa)). Residue N825 is glycosylated (N-linked (GlcNAc...) asparagine). Residues 940 to 964 (HASTLSPSYSTPLASASGQTGSPTT) show a composition bias toward polar residues. N-linked (GlcNAc...) asparagine glycosylation occurs at N973. Residues 1145–1154 (ASPSGSQPAG) show a composition bias toward polar residues. Positions 1156–1174 (SSPGQSAPTAPASTAPTTT) are enriched in low complexity. Residue G1231 is the site of GPI-anchor amidated glycine attachment. The propeptide at 1232 to 1257 (AASRVSRLQHGAGAVSAFALFLLAAI) is removed in mature form.

The protein belongs to the glycosyl hydrolase 18 family. Chitinase class III subfamily. Post-translationally, O-glycosylated.

The protein localises to the cell membrane. It is found in the secreted. It localises to the cell wall. The catalysed reaction is Random endo-hydrolysis of N-acetyl-beta-D-glucosaminide (1-&gt;4)-beta-linkages in chitin and chitodextrins.. GPI-anchored chitinase involved in the degradation of chitin, a component of the cell walls of fungi and exoskeletal elements of some animals (including worms and arthropods). Required to reshape the cell wall at the sites where cell wall remodeling and/or cell wall maturation actively take place such as sites of conidia formation. In Aspergillus niger (strain ATCC MYA-4892 / CBS 513.88 / FGSC A1513), this protein is Endochitinase A (ctcA).